We begin with the raw amino-acid sequence, 382 residues long: 8-amino-7-oxononanoate synthase (382 aa).

The substrate site is built by Arg-21 and His-131. 3 residues coordinate pyridoxal 5'-phosphate: Ser-178, His-206, and Thr-232. Lys-235 carries the N6-(pyridoxal phosphate)lysine modification. A substrate-binding site is contributed by Thr-349.

Belongs to the class-II pyridoxal-phosphate-dependent aminotransferase family. BioF subfamily. As to quaternary structure, homodimer. Pyridoxal 5'-phosphate is required as a cofactor.

It carries out the reaction 6-carboxyhexanoyl-[ACP] + L-alanine + H(+) = (8S)-8-amino-7-oxononanoate + holo-[ACP] + CO2. Its pathway is cofactor biosynthesis; biotin biosynthesis. Its function is as follows. Catalyzes the decarboxylative condensation of pimeloyl-[acyl-carrier protein] and L-alanine to produce 8-amino-7-oxononanoate (AON), [acyl-carrier protein], and carbon dioxide. This is 8-amino-7-oxononanoate synthase from Serratia marcescens.